Reading from the N-terminus, the 618-residue chain is MSLSTEQMLRDYPRSMQINGQIPKNAIHETYGNDGVDVFIAGSGPIGATYAKLCVEAGLRVVMVEIGAADSFYAVNAEEGTAVPYVPGYHKKNEIEFQKDIDRFVNVIKGALQQVSVPVRNQNVPTLDPGAWSAPPGSSAISNGKNPHQREFENLSAEAVTRGVGGMSTHWTCSTPRIHPPMESLPGIGRPKLSNDPAEDDKEWNELYSEAERLIGTSTKEFDESIRHTLVLRSLQDAYKDRQRIFRPLPLACHRLKNAPEYVEWHSAENLFHSIYNDDKQKKLFTLLTNHRCTRLALTGGYEKKIGAAEVRNLLATRNPSSQLDSYIMAKVYVLASGAIGNPQILYNSGFSGLQVTPRNDSLIPNLGRYITEQPMAFCQIVLRQEFVDSVRDDPYGLPWWKEAVAQHIAKNPTDALPIPFRDPEPQVTTPFTEEHPWHTQIHRDAFSYGAVGPEVDSRVIVDLRWFGATDPEANNLLVFQNDVQDGYSMPQPTFRYRPSTASNVRARKMMADMCEVASNLGGYLPTSPPQFMDPGLALHLAGTTRIGFDKATTVADNNSLVWDFANLYVAGNGTIRTGFGENPTLTSMCHAIKSARSIINTLKGGTDGKNTGEHRNL.

The residue at position 170 (H170) is a Tele-8alpha-FAD histidine. The substrate site is built by Q441 and H443. The active-site Proton acceptor is H540. The active site involves N583.

It belongs to the GMC oxidoreductase family. In terms of assembly, homotetramer. Requires FAD as cofactor.

It catalyses the reaction D-glucose + O2 = 2-dehydro-D-glucose + H2O2. Functionally, catalyzes the oxidation of various aldopyranoses and disaccharides on carbon-2 to the corresponding 2-keto sugars concomitant with the reduction of O(2) to H(2)O(2). The chain is Pyranose 2-oxidase (p2ox) from Lyophyllum shimeji (Hon-shimeji).